Here is a 548-residue protein sequence, read N- to C-terminus: Sensor protein TdiS (548 aa).

One can recognise a PAS 1 domain in the interval 20–89 (DPATGYEVIF…IGENYGHFFE (70 aa)). The region spanning 94–145 (FKDERPIIRKDGSVIWCIVTGSLLDSSNPRLGSIWVVQDISEHKRTEDDLKA) is the PAC 1 domain. Residues 185–256 (HREKYEKLFH…RKRLPWRIHD (72 aa)) form the PAS 2 domain. Positions 263–314 (KNIEIGMREEESRKQRWLSVSSSLLELKGQKMVVAAFTDITYRKRIEELERL) constitute a PAC 2 domain. The Histidine kinase domain maps to 334 to 548 (ALAHQMGQPL…GSKFQFTLPI (215 aa)). At H337 the chain carries Phosphohistidine; by autocatalysis.

Autophosphorylated.

It catalyses the reaction ATP + protein L-histidine = ADP + protein N-phospho-L-histidine.. Member of the two-component regulatory system TdiR/TdiS, which probably regulates transcription of toluene catabolic genes (bss operon). May activate TdiR by phosphorylation. The sequence is that of Sensor protein TdiS (tdiS) from Thauera aromatica.